Here is a 272-residue protein sequence, read N- to C-terminus: Bis(5'-nucleosyl)-tetraphosphatase, symmetrical (272 aa).

This sequence belongs to the Ap4A hydrolase family.

It carries out the reaction P(1),P(4)-bis(5'-adenosyl) tetraphosphate + H2O = 2 ADP + 2 H(+). In terms of biological role, hydrolyzes diadenosine 5',5'''-P1,P4-tetraphosphate to yield ADP. The protein is Bis(5'-nucleosyl)-tetraphosphatase, symmetrical of Shewanella frigidimarina (strain NCIMB 400).